A 238-amino-acid polypeptide reads, in one-letter code: Uridylate kinase (238 aa).

Position 12 to 15 (12 to 15 (KLSG)) interacts with ATP. UMP is bound at residue glycine 54. ATP-binding residues include glycine 55 and arginine 59. UMP contacts are provided by residues aspartate 74 and 135-142 (TGNPYFTT). Residues threonine 162, asparagine 163, tyrosine 168, and aspartate 171 each contribute to the ATP site.

This sequence belongs to the UMP kinase family. Homohexamer.

The protein localises to the cytoplasm. It carries out the reaction UMP + ATP = UDP + ADP. It participates in pyrimidine metabolism; CTP biosynthesis via de novo pathway; UDP from UMP (UMPK route): step 1/1. Its activity is regulated as follows. Inhibited by UTP. Functionally, catalyzes the reversible phosphorylation of UMP to UDP. This chain is Uridylate kinase, found in Bradyrhizobium sp. (strain ORS 278).